The chain runs to 64 residues: Large ribosomal subunit protein bL28 (64 aa).

Belongs to the bacterial ribosomal protein bL28 family.

The sequence is that of Large ribosomal subunit protein bL28 from Elusimicrobium minutum (strain Pei191).